Reading from the N-terminus, the 698-residue chain is Na(+)/H(+) antiporter NhaS5 (698 aa).

The next 12 membrane-spanning stretches (helical) occupy residues 10–30 (SNPLIDFTILLLVTLILPPIF), 35–55 (LPGLVGLLFAGIVLGKSGLGV), 65–85 (LFTDIGKIYLMFVAGLEIDMV), 100–120 (LTFAVPLLTGLAVGLTFGYSF), 121–141 (NASVLLGSLFASHTLLGYPIV), 156–176 (IGATIFTDIAALLVLAICISI), 184–204 (AGLVVQLVAIAVYSALVLIGF), 222–242 (QFLFVLLAVFLASVGSELINV), 275–295 (LFIPFFFIGIGLLLDLPAFLV), 300–320 (LFPLVVAIVVGLILSKGVAAI), 333–353 (GLTMWSLSIPQVAATLAAAVA), and 370–390 (VLNTIIVLMLITSIVGPLMTA).

It belongs to the monovalent cation:proton antiporter 2 (CPA2) transporter (TC 2.A.37) family.

The protein localises to the membrane. Its function is as follows. Na(+)/H(+) antiporter. This chain is Na(+)/H(+) antiporter NhaS5 (nhaS5), found in Synechocystis sp. (strain ATCC 27184 / PCC 6803 / Kazusa).